The sequence spans 468 residues: Argininosuccinate lyase (468 aa).

Belongs to the lyase 1 family. Argininosuccinate lyase subfamily.

The protein resides in the cytoplasm. It carries out the reaction 2-(N(omega)-L-arginino)succinate = fumarate + L-arginine. The protein operates within amino-acid biosynthesis; L-arginine biosynthesis; L-arginine from L-ornithine and carbamoyl phosphate: step 3/3. The polypeptide is Argininosuccinate lyase (Cutibacterium acnes (strain DSM 16379 / KPA171202) (Propionibacterium acnes)).